Here is a 1017-residue protein sequence, read N- to C-terminus: MADNVLRKLIVEICSARNLMPKDGQGTASAYAIVDFDGQRRRTKTKFRDLNPQWDEKLEFFVHDVATMGEEILEINLCNDKKTGKRSTFLGKVKIAGSAFASAGSETLVYYPLEKRSVFSQIKGEIGLKAYYVDENPPAAPAATEPKPEAAAATEEKPPEIAKAEDGKKETEAAKTEEKKEGDKKEEEKPKEEAKPDEKKPDAPPDTKAKKPDTAVAPPPPPAEVKNPPIPQKAETVKQNELGIKPENVNRQDLIGSDLELPSLTRDQNRGGGYDLVDRMPFLYIRVAKAKRAKNDGSNPVYAKLVIGTNGVKTRSQTGKDWDQVFAFEKESLNSTSLEVSVWSEEKIEKEDKTTTTTESCLGTVSFDLQEVPKRVPPDSPLAPQWYTLESEKSPGNDVMLAVWLGTQADEAFQEAWQSDSGGLIPETRSKVYLSPKLWYLRLTVIQTQDLQLGLGSEAKSKIPTTELYVKAQLGPQVFKTARTSIGPSASSSGSGNPTWNEDLVFVASEPFEPFLIVTVEDITNGQSIGQTKIHMGSVERRNDDRTEPKSRWFNLAGDEKKPYSGRIHVKVCLEGGYHVLDEAAHVTSDVRPSAKQLAKPPIGLLEVGIRGATNLLPVKTRDGTRGTTDAYVVAKYGPKWIRTRTILDRFNPRWNEQYTWDVYDPCTVLTIGVFDNGRYKRDESGKQGRDVRVGKIRVRLSTLDMNRIYLNSYTLTVILPSGAKKMGEVEIAVRFSCPSWLSIIQAYVTPMLPRMHYVRPLGPAQQDILRHTAMRIVTARLARSEPPLGQEVVQYMLDTDNHVWSMRRSKANWFRVITFLSRAATIARWIHGIRTWVHPPTTVLVHLLLVAIVLCPHLVLPTVFMYAFLILALRFRYRGRVKVNSVDPRLSCVDSVAPDELDEEFDGFPTTRQPEVVRIRYDRLRALAGRAQTLLGDVAAQGERVEALFNWRDPRATCIFVVFCLFASFLFYIVPFKVFLLGSGFYYIRHPRFRDDMPSVPVNFFRRLPSMSDQIL.

In terms of domain architecture, C2 1 spans 1–110 (MADNVLRKLI…ASAGSETLVY (110 aa)). A disordered region spans residues 139–231 (AAPAATEPKP…PAEVKNPPIP (93 aa)). The span at 141 to 153 (PAATEPKPEAAAA) shows a compositional bias: low complexity. The segment covering 154–213 (TEEKPPEIAKAEDGKKETEAAKTEEKKEGDKKEEEKPKEEAKPDEKKPDAPPDTKAKKPD) has biased composition (basic and acidic residues). Residues 217–231 (APPPPPAEVKNPPIP) show a composition bias toward pro residues. C2 domains lie at 258 to 387 (DLEL…PQWY), 420 to 554 (DSGG…SRWF), and 587 to 714 (VTSD…LNSY). The Ca(2+) site is built by Asp-296, Asn-299, Asp-352, Thr-355, and Glu-359. Transmembrane regions (helical) follow at residues 851-871 (VAIVLCPHLVLPTVFMYAFLI) and 957-977 (ATCIFVVFCLFASFLFYIVPF).

Belongs to the MCTP family. It depends on Ca(2+) as a cofactor. As to expression, expressed in incipient leaf primordia and in roots meristems. Observed in flowers.

It localises to the membrane. Its subcellular location is the vesicle. It is found in the golgi apparatus membrane. In terms of biological role, may function as a signaling molecule by regulating the trafficking of other regulators. The polypeptide is Multiple C2 domain and transmembrane region protein 14 (Arabidopsis thaliana (Mouse-ear cress)).